Here is a 49-residue protein sequence, read N- to C-terminus: Large ribosomal subunit protein bL33B (49 aa).

The protein belongs to the bacterial ribosomal protein bL33 family.

The chain is Large ribosomal subunit protein bL33B from Geobacillus kaustophilus (strain HTA426).